The sequence spans 719 residues: Putative ankyrin repeat protein RBE_0319 (719 aa).

9 ANK repeats span residues 377–406 (VAEE…EISS), 408–438 (TLIK…NINE), 442–472 (NGGT…EVNK), 476–506 (YGFT…EINQ), 510–540 (YQTT…KFNE), 544–572 (LGYT…DINQ), 576–605 (DGYT…NVNE), 609–639 (HGLT…EVSE), and 642–672 (QYGT…NLNK).

The sequence is that of Putative ankyrin repeat protein RBE_0319 from Rickettsia bellii (strain RML369-C).